The sequence spans 316 residues: MRXRWPAQPSKYDRLIAAARAEAPAVTIVAHPCDETSLGGAIEAAEMGLITPILVAPEAKIRNVAAEHRLDLGRREIVDVPHSHAAAAKAVALIREGRGELLMKGSLHTDELMHEVAASATGLRTQRRISHVFVMDVPGHTDTLFITDAAINIFPDLEAKRDIVQNAIDLWVAIGLGEPRVAILSAVETVTAKIPSTIEAAALCKMAERGQITGGVLEGPLAFDNAIDQEAARIKGINSPVAGHAQILVVPDLEAGNMLAKNLTFLTHADAAGLVLGARVPIVLTSRADSVRTRLASCAVAALYAARRRAAQVAAV.

The protein belongs to the phosphate acetyltransferase and butyryltransferase family.

Its subcellular location is the cytoplasm. The enzyme catalyses acetyl-CoA + phosphate = acetyl phosphate + CoA. Its pathway is metabolic intermediate biosynthesis; acetyl-CoA biosynthesis; acetyl-CoA from acetate: step 2/2. The protein is Phosphate acetyltransferase (pta) of Rhizobium meliloti (Ensifer meliloti).